Consider the following 395-residue polypeptide: Gastric triacylglycerol lipase (395 aa).

A signal peptide spans 1-18; sequence MWLLLITSVISTFGGAHG. Asn33, Asn68, and Asn98 each carry an N-linked (GlcNAc...) asparagine glycan. One can recognise an AB hydrolase-1 domain in the interval 77–376; the sequence is PVVYLQHGLI…LAYNHLDFIW (300 aa). The active-site Nucleophile is the Ser171. Cysteines 245 and 254 form a disulfide. A glycan (N-linked (GlcNAc...) asparagine) is linked at Asn270. Active-site charge relay system residues include Asp342 and His371.

Belongs to the AB hydrolase superfamily. Lipase family. As to expression, secreted by the serous (von Ebner's) glands at the back of the rat tongue.

The protein resides in the secreted. The catalysed reaction is a triacylglycerol + H2O = a diacylglycerol + a fatty acid + H(+). It carries out the reaction 1,2,3-tri-(9Z-octadecenoyl)-glycerol + H2O = 1,2-di-(9Z-octadecenoyl)-sn-glycerol + (9Z)-octadecenoate + H(+). The enzyme catalyses 1,2,3-trioctanoylglycerol + H2O = 1,2-dioctanoyl-sn-glycerol + octanoate + H(+). Functionally, catalyzes the hydrolysis of triacylglycerols to yield free fatty acids, diacylglycerol, monoacylglycerol, and glycerol. Shows a preferential hydrolysis at the sn-3 position of triacylglycerol. The chain is Gastric triacylglycerol lipase (Lipf) from Rattus norvegicus (Rat).